Here is a 345-residue protein sequence, read N- to C-terminus: Annexin A9 (345 aa).

Annexin repeat units lie at residues 41–112 (FSVD…ALLQ), 113–184 (PTAQ…ALAK), 197–266 (NLAE…GLAS), and 270–341 (NTPL…ALCR).

The protein belongs to the annexin family. As to quaternary structure, homodimer. In terms of tissue distribution, expressed in the stratified squamous skin epithelium, but not in epithelia of other types (at protein level).

Functionally, low affinity receptor for acetylcholine known to be targeted by disease-causing pemphigus vulgaris antibodies in keratinocytes. This Homo sapiens (Human) protein is Annexin A9 (ANXA9).